A 149-amino-acid chain; its full sequence is uncharacterized protein (149 aa).

The segment covering 130–144 has biased composition (basic and acidic residues); the sequence is ESNVTKENIEIKEEK. Positions 130-149 are disordered; the sequence is ESNVTKENIEIKEEKEENSE.

This is an uncharacterized protein from Methanocaldococcus jannaschii (strain ATCC 43067 / DSM 2661 / JAL-1 / JCM 10045 / NBRC 100440) (Methanococcus jannaschii).